A 476-amino-acid chain; its full sequence is Cysteine--tRNA ligase (476 aa).

Zn(2+) is bound at residue C28. Residues 30-40 (PTVYDNTHLGH) carry the 'HIGH' region motif. Residues C208, H233, and E237 each contribute to the Zn(2+) site. Positions 265–269 (KMSKS) match the 'KMSKS' region motif. K268 contributes to the ATP binding site.

The protein belongs to the class-I aminoacyl-tRNA synthetase family. Requires Zn(2+) as cofactor.

The protein resides in the cytoplasm. It catalyses the reaction tRNA(Cys) + L-cysteine + ATP = L-cysteinyl-tRNA(Cys) + AMP + diphosphate. The polypeptide is Cysteine--tRNA ligase (Methanococcus maripaludis (strain DSM 14266 / JCM 13030 / NBRC 101832 / S2 / LL)).